We begin with the raw amino-acid sequence, 299 residues long: Nucleotide-binding protein AFE_3021 (299 aa).

ATP is bound at residue 11 to 18 (GLSGSGKS). 62–65 (DVRN) is a binding site for GTP.

This sequence belongs to the RapZ-like family.

Its function is as follows. Displays ATPase and GTPase activities. The protein is Nucleotide-binding protein AFE_3021 of Acidithiobacillus ferrooxidans (strain ATCC 23270 / DSM 14882 / CIP 104768 / NCIMB 8455) (Ferrobacillus ferrooxidans (strain ATCC 23270)).